The sequence spans 254 residues: MINIGIHGASGKMGQMIINCLKDSKDAKLTALYTIEPLGSVPEGVIVTDDLNELFANCDVVIDFTIKEGALNLINYARTNPKPLVIGTTGLGDDGTNLLNLAANAMPILYATNMSLGVAVLNRLASLAAKTLAEFDIEIVEQHHRHKKDAPSGTALTLAQHAANARGLNLKDVIVTGRDGLVGARSKDEIAVLAVRGGDVVGRHTIGFYNEGEFIEINHTATSRATFAKGAIKAAVWLSSQKNGLYSIYDCLGL.

Residues 8-13, 87-89, and 111-114 contribute to the NAD(+) site; these read GASGKM, GTT, and ATNM. Histidine 143 (proton donor/acceptor) is an active-site residue. Histidine 144 serves as a coordination point for (S)-2,3,4,5-tetrahydrodipicolinate. Lysine 147 (proton donor) is an active-site residue. 153–154 is a binding site for (S)-2,3,4,5-tetrahydrodipicolinate; that stretch reads GT.

This sequence belongs to the DapB family.

The protein resides in the cytoplasm. The enzyme catalyses (S)-2,3,4,5-tetrahydrodipicolinate + NAD(+) + H2O = (2S,4S)-4-hydroxy-2,3,4,5-tetrahydrodipicolinate + NADH + H(+). It catalyses the reaction (S)-2,3,4,5-tetrahydrodipicolinate + NADP(+) + H2O = (2S,4S)-4-hydroxy-2,3,4,5-tetrahydrodipicolinate + NADPH + H(+). The protein operates within amino-acid biosynthesis; L-lysine biosynthesis via DAP pathway; (S)-tetrahydrodipicolinate from L-aspartate: step 4/4. Catalyzes the conversion of 4-hydroxy-tetrahydrodipicolinate (HTPA) to tetrahydrodipicolinate. The sequence is that of 4-hydroxy-tetrahydrodipicolinate reductase from Campylobacter curvus (strain 525.92).